The following is a 103-amino-acid chain: Large ribosomal subunit protein bL21 (103 aa).

It belongs to the bacterial ribosomal protein bL21 family. Part of the 50S ribosomal subunit. Contacts protein L20.

Its function is as follows. This protein binds to 23S rRNA in the presence of protein L20. In Polaromonas sp. (strain JS666 / ATCC BAA-500), this protein is Large ribosomal subunit protein bL21.